Consider the following 255-residue polypeptide: 4-hydroxy-tetrahydrodipicolinate reductase (255 aa).

NAD(+) is bound by residues 13 to 18 (GCNGKM), 90 to 92 (CTT), and 114 to 117 (SANM). The active-site Proton donor/acceptor is histidine 147. Histidine 148 contacts (S)-2,3,4,5-tetrahydrodipicolinate. Residue lysine 151 is the Proton donor of the active site. Residue 157-158 (GT) coordinates (S)-2,3,4,5-tetrahydrodipicolinate.

Belongs to the DapB family.

The protein localises to the cytoplasm. It carries out the reaction (S)-2,3,4,5-tetrahydrodipicolinate + NAD(+) + H2O = (2S,4S)-4-hydroxy-2,3,4,5-tetrahydrodipicolinate + NADH + H(+). It catalyses the reaction (S)-2,3,4,5-tetrahydrodipicolinate + NADP(+) + H2O = (2S,4S)-4-hydroxy-2,3,4,5-tetrahydrodipicolinate + NADPH + H(+). It participates in amino-acid biosynthesis; L-lysine biosynthesis via DAP pathway; (S)-tetrahydrodipicolinate from L-aspartate: step 4/4. Functionally, catalyzes the conversion of 4-hydroxy-tetrahydrodipicolinate (HTPA) to tetrahydrodipicolinate. This is 4-hydroxy-tetrahydrodipicolinate reductase from Clostridium tetani (strain Massachusetts / E88).